A 257-amino-acid chain; its full sequence is Thiazole synthase (257 aa).

Catalysis depends on K97, which acts as the Schiff-base intermediate with DXP. 1-deoxy-D-xylulose 5-phosphate contacts are provided by residues G158, 184-185 (AG), and 206-207 (NT).

It belongs to the ThiG family. In terms of assembly, homotetramer. Forms heterodimers with either ThiH or ThiS.

Its subcellular location is the cytoplasm. It carries out the reaction [ThiS sulfur-carrier protein]-C-terminal-Gly-aminoethanethioate + 2-iminoacetate + 1-deoxy-D-xylulose 5-phosphate = [ThiS sulfur-carrier protein]-C-terminal Gly-Gly + 2-[(2R,5Z)-2-carboxy-4-methylthiazol-5(2H)-ylidene]ethyl phosphate + 2 H2O + H(+). It functions in the pathway cofactor biosynthesis; thiamine diphosphate biosynthesis. Its function is as follows. Catalyzes the rearrangement of 1-deoxy-D-xylulose 5-phosphate (DXP) to produce the thiazole phosphate moiety of thiamine. Sulfur is provided by the thiocarboxylate moiety of the carrier protein ThiS. In vitro, sulfur can be provided by H(2)S. This is Thiazole synthase from Desulforamulus reducens (strain ATCC BAA-1160 / DSM 100696 / MI-1) (Desulfotomaculum reducens).